We begin with the raw amino-acid sequence, 718 residues long: Sodium/myo-inositol cotransporter (718 aa).

The Extracellular segment spans residues 1-9; sequence MRAVLETAD. Residues 10–29 form a helical membrane-spanning segment; that stretch reads IAIVALYFILVMCIGFFAMW. Topologically, residues 30 to 38 are cytoplasmic; that stretch reads KSNRSTVSG. The helical transmembrane segment at 39-57 threads the bilayer; it reads YFLAGRSMTWVAIGASLFV. The Extracellular segment spans residues 58 to 86; that stretch reads SNIGSEHFIGLAGSGAASGFAVGAWEFNA. The helical transmembrane segment at 87–110 threads the bilayer; sequence LLLLQLLGWVFIPIYIRSGVYTMP. Residues 111–123 lie on the Cytoplasmic side of the membrane; it reads EYLSKRFGGHRIQ. Residues 124 to 144 form a helical membrane-spanning segment; the sequence is VYFAALSLILYIFTKLSVDLY. Topologically, residues 145-157 are extracellular; that stretch reads SGALFIQESLGWN. The helical transmembrane segment at 158–183 threads the bilayer; that stretch reads LYVSVILLIGMTALLTVTGGLVAVIY. The Cytoplasmic segment spans residues 184-186; that stretch reads TDT. A helical membrane pass occupies residues 187–205; it reads LQALLMIVGALTLMIISMM. At 206 to 303 the chain is on the extracellular side; it reads EIGGFEEVKR…HAKGSTLMAG (98 aa). Residue N232 is glycosylated (N-linked (GlcNAc...) asparagine). A helical membrane pass occupies residues 304–324; sequence FLKLLPMFIIVVPGMISRILF. At 325-353 the chain is on the cytoplasmic side; sequence ADDIACINPEHCMQVCGSRAGCSNIAYPR. Residues 354 to 376 form a helical membrane-spanning segment; sequence LVMKLVPVGLRGLMMAVMIAALM. Residues 377–406 lie on the Extracellular side of the membrane; that stretch reads SDLDSIFNSASTIFTLDVYKLIRRSASSRE. Residues 407–430 form a helical membrane-spanning segment; sequence LMIVGRIFVAFMVVISIAWVPIIV. Residues 431 to 443 are Cytoplasmic-facing; sequence EMQGGQMYLYIQE. Residues 444–462 form a helical membrane-spanning segment; the sequence is VADYLTPPVAALFLLAIFW. The Extracellular portion of the chain corresponds to 463–510; the sequence is KRCNEQGAFYGGMAGFVLGAVRLTLAFAYRAPECDQPDNRPGFIKDIH. Residues 511-532 traverse the membrane as a helical segment; sequence YMYVATALFWVTGLITVIVSLL. Residues 533-695 lie on the Cytoplasmic side of the membrane; sequence TPPPTKEQIR…QMLEEPPQVK (163 aa). Residues S594 and S632 each carry the phosphoserine modification. Residues 696–716 traverse the membrane as a helical segment; it reads LILNIGLFAVCSLGIFMFVYF. The Extracellular segment spans residues 717–718; the sequence is SL.

It belongs to the sodium:solute symporter (SSF) (TC 2.A.21) family. As to quaternary structure, interacts with KCNQ2 (via the pore module). Interacts with KCNQ1; this interaction is direct. Forms coregulatory complexes with ion channels KCNQ2-KCNQ3 and KCNQ1-KCNE2. Kidney cortex and medulla.

It localises to the apical cell membrane. The protein resides in the basolateral cell membrane. It carries out the reaction myo-inositol(out) + 2 Na(+)(out) = myo-inositol(in) + 2 Na(+)(in). The enzyme catalyses scyllo-inositol(out) + 2 Na(+)(out) = scyllo-inositol(in) + 2 Na(+)(in). Its activity is regulated as follows. Inhibited by phlorizin and phloretin. Its function is as follows. Electrogenic Na(+)-coupled sugar symporter that actively transports myo-inositol and its stereoisomer scyllo-inositol across the plasma membrane, with a Na(+) to sugar coupling ratio of 2:1. Maintains myo-inositol concentration gradient that defines cell volume and fluid balance during osmotic stress, in particular in the fetoplacental unit and central nervous system. Forms coregulatory complexes with voltage-gated K(+) ion channels, allosterically altering ion selectivity, voltage dependence and gating kinetics of the channel. In turn, K(+) efflux through the channel forms a local electrical gradient that modulates electrogenic Na(+)-coupled myo-inositol influx through the transporter. Associates with KCNQ1-KCNE2 channel in the apical membrane of choroid plexus epithelium and regulates the myo-inositol gradient between blood and cerebrospinal fluid with an impact on neuron excitability. Associates with KCNQ2-KCNQ3 channel altering ion selectivity, increasing Na(+) and Cs(+) permeation relative to K(+) permeation. Provides myo-inositol precursor for biosynthesis of phosphoinositides such as PI(4,5)P2, thus indirectly affecting the activity of phosphoinositide-dependent ion channels and Ca(2+) signaling upon osmotic stress. Has very low affinity for sugars such as L-fucose and L-xylose, with an affinity about three orders of magnitude lower than myo-inositol. The protein is Sodium/myo-inositol cotransporter (SLC5A3) of Canis lupus familiaris (Dog).